Consider the following 248-residue polypeptide: ATP synthase subunit a (248 aa).

5 consecutive transmembrane segments (helical) span residues 31–51, 90–110, 129–149, 195–215, and 216–236; these read GQVL…VILG, VPYV…GNLF, INTT…AGIS, VIAV…MVLF, and LFTG…YIGE.

It belongs to the ATPase A chain family. F-type ATPases have 2 components, CF(1) - the catalytic core - and CF(0) - the membrane proton channel. CF(1) has five subunits: alpha(3), beta(3), gamma(1), delta(1), epsilon(1). CF(0) has four main subunits: a, b, b' and c.

The protein localises to the cellular thylakoid membrane. Key component of the proton channel; it plays a direct role in the translocation of protons across the membrane. The polypeptide is ATP synthase subunit a (Synechococcus sp. (strain JA-2-3B'a(2-13)) (Cyanobacteria bacterium Yellowstone B-Prime)).